The primary structure comprises 242 residues: Anthranilate phosphoribosyltransferase (242 aa).

Residues glycine 79, 82–83, threonine 87, 89–92, 107–115, and serine 119 each bind 5-phospho-alpha-D-ribose 1-diphosphate; these read GD, NVST, and KHGNRAVSS. Glycine 79 provides a ligand contact to anthranilate. Serine 91 contacts Mg(2+). Asparagine 110 serves as a coordination point for anthranilate. Arginine 165 is a binding site for anthranilate. Positions 224 and 225 each coordinate Mg(2+).

This sequence belongs to the anthranilate phosphoribosyltransferase family. In terms of assembly, homodimer. Requires Mg(2+) as cofactor.

The catalysed reaction is N-(5-phospho-beta-D-ribosyl)anthranilate + diphosphate = 5-phospho-alpha-D-ribose 1-diphosphate + anthranilate. The protein operates within amino-acid biosynthesis; L-tryptophan biosynthesis; L-tryptophan from chorismate: step 2/5. Catalyzes the transfer of the phosphoribosyl group of 5-phosphorylribose-1-pyrophosphate (PRPP) to anthranilate to yield N-(5'-phosphoribosyl)-anthranilate (PRA). The sequence is that of Anthranilate phosphoribosyltransferase (trpD) from Bacillus caldotenax.